The following is a 378-amino-acid chain: Dual-specificity RNA methyltransferase RlmN (378 aa).

E95 serves as the catalytic Proton acceptor. Residues 101–345 (EETRGTLCVS…TTIRKTRGDD (245 aa)) form the Radical SAM core domain. Residues C108 and C350 are joined by a disulfide bond. [4Fe-4S] cluster is bound by residues C115, C119, and C122. Residues 176-177 (GE), S208, 230-232 (SLH), and N307 contribute to the S-adenosyl-L-methionine site. C350 (S-methylcysteine intermediate) is an active-site residue.

The protein belongs to the radical SAM superfamily. RlmN family. It depends on [4Fe-4S] cluster as a cofactor.

The protein localises to the cytoplasm. The catalysed reaction is adenosine(2503) in 23S rRNA + 2 reduced [2Fe-2S]-[ferredoxin] + 2 S-adenosyl-L-methionine = 2-methyladenosine(2503) in 23S rRNA + 5'-deoxyadenosine + L-methionine + 2 oxidized [2Fe-2S]-[ferredoxin] + S-adenosyl-L-homocysteine. The enzyme catalyses adenosine(37) in tRNA + 2 reduced [2Fe-2S]-[ferredoxin] + 2 S-adenosyl-L-methionine = 2-methyladenosine(37) in tRNA + 5'-deoxyadenosine + L-methionine + 2 oxidized [2Fe-2S]-[ferredoxin] + S-adenosyl-L-homocysteine. Its function is as follows. Specifically methylates position 2 of adenine 2503 in 23S rRNA and position 2 of adenine 37 in tRNAs. m2A2503 modification seems to play a crucial role in the proofreading step occurring at the peptidyl transferase center and thus would serve to optimize ribosomal fidelity. The protein is Dual-specificity RNA methyltransferase RlmN of Burkholderia pseudomallei (strain K96243).